The sequence spans 316 residues: Ribosomal RNA small subunit methyltransferase H (316 aa).

Residues 35-37, D55, F84, D105, and Q112 contribute to the S-adenosyl-L-methionine site; that span reads AGH.

It belongs to the methyltransferase superfamily. RsmH family.

The protein resides in the cytoplasm. It carries out the reaction cytidine(1402) in 16S rRNA + S-adenosyl-L-methionine = N(4)-methylcytidine(1402) in 16S rRNA + S-adenosyl-L-homocysteine + H(+). Specifically methylates the N4 position of cytidine in position 1402 (C1402) of 16S rRNA. This chain is Ribosomal RNA small subunit methyltransferase H, found in Streptococcus pneumoniae (strain 70585).